We begin with the raw amino-acid sequence, 663 residues long: Bifunctional polymyxin resistance protein ArnA (663 aa).

Positions 1–307 (MSSKAVVFAY…ELGLVDGSVL (307 aa)) are formyltransferase ArnAFT. His-106 (proton donor; for formyltransferase activity) is an active-site residue. (6R)-10-formyltetrahydrofolate is bound by residues Arg-116 and 138-142 (VKRAD). The interval 317 to 663 (RRTRVLILGV…EAMLEIADKK (347 aa)) is dehydrogenase ArnADH. NAD(+)-binding positions include Asp-350 and 371–372 (DI). Residues Ala-396, Tyr-401, and 435 to 436 (TS) contribute to the UDP-alpha-D-glucuronate site. Glu-437 acts as the Proton acceptor; for decarboxylase activity in catalysis. UDP-alpha-D-glucuronate is bound by residues Arg-463, Asn-494, 528-537 (RLFDGGEQKR), and Tyr-615. The Proton donor; for decarboxylase activity role is filled by Arg-621.

It in the N-terminal section; belongs to the Fmt family. UDP-L-Ara4N formyltransferase subfamily. In the C-terminal section; belongs to the NAD(P)-dependent epimerase/dehydratase family. UDP-glucuronic acid decarboxylase subfamily. In terms of assembly, homohexamer, formed by a dimer of trimers.

The enzyme catalyses UDP-alpha-D-glucuronate + NAD(+) = UDP-beta-L-threo-pentopyranos-4-ulose + CO2 + NADH. It catalyses the reaction UDP-4-amino-4-deoxy-beta-L-arabinose + (6R)-10-formyltetrahydrofolate = UDP-4-deoxy-4-formamido-beta-L-arabinose + (6S)-5,6,7,8-tetrahydrofolate + H(+). It participates in nucleotide-sugar biosynthesis; UDP-4-deoxy-4-formamido-beta-L-arabinose biosynthesis; UDP-4-deoxy-4-formamido-beta-L-arabinose from UDP-alpha-D-glucuronate: step 1/3. Its pathway is nucleotide-sugar biosynthesis; UDP-4-deoxy-4-formamido-beta-L-arabinose biosynthesis; UDP-4-deoxy-4-formamido-beta-L-arabinose from UDP-alpha-D-glucuronate: step 3/3. It functions in the pathway bacterial outer membrane biogenesis; lipopolysaccharide biosynthesis. Bifunctional enzyme that catalyzes the oxidative decarboxylation of UDP-glucuronic acid (UDP-GlcUA) to UDP-4-keto-arabinose (UDP-Ara4O) and the addition of a formyl group to UDP-4-amino-4-deoxy-L-arabinose (UDP-L-Ara4N) to form UDP-L-4-formamido-arabinose (UDP-L-Ara4FN). The modified arabinose is attached to lipid A and is required for resistance to polymyxin and cationic antimicrobial peptides. This chain is Bifunctional polymyxin resistance protein ArnA, found in Pseudomonas fluorescens (strain SBW25).